The sequence spans 263 residues: Acyl-[acyl-carrier-protein]--UDP-N-acetylglucosamine O-acyltransferase (263 aa).

Belongs to the transferase hexapeptide repeat family. LpxA subfamily. In terms of assembly, homotrimer.

It is found in the cytoplasm. The enzyme catalyses a (3R)-hydroxyacyl-[ACP] + UDP-N-acetyl-alpha-D-glucosamine = a UDP-3-O-[(3R)-3-hydroxyacyl]-N-acetyl-alpha-D-glucosamine + holo-[ACP]. Its pathway is glycolipid biosynthesis; lipid IV(A) biosynthesis; lipid IV(A) from (3R)-3-hydroxytetradecanoyl-[acyl-carrier-protein] and UDP-N-acetyl-alpha-D-glucosamine: step 1/6. Its function is as follows. Involved in the biosynthesis of lipid A, a phosphorylated glycolipid that anchors the lipopolysaccharide to the outer membrane of the cell. The polypeptide is Acyl-[acyl-carrier-protein]--UDP-N-acetylglucosamine O-acyltransferase (Campylobacter jejuni subsp. jejuni serotype O:6 (strain 81116 / NCTC 11828)).